We begin with the raw amino-acid sequence, 174 residues long: ATP-dependent protease subunit HslV (174 aa).

Residue Thr2 is part of the active site. Na(+) is bound by residues Gly157, Cys160, and Thr163.

This sequence belongs to the peptidase T1B family. HslV subfamily. In terms of assembly, a double ring-shaped homohexamer of HslV is capped on each side by a ring-shaped HslU homohexamer. The assembly of the HslU/HslV complex is dependent on binding of ATP.

It is found in the cytoplasm. It catalyses the reaction ATP-dependent cleavage of peptide bonds with broad specificity.. Its activity is regulated as follows. Allosterically activated by HslU binding. In terms of biological role, protease subunit of a proteasome-like degradation complex believed to be a general protein degrading machinery. The chain is ATP-dependent protease subunit HslV from Shewanella sediminis (strain HAW-EB3).